An 85-amino-acid polypeptide reads, in one-letter code: Small ribosomal subunit protein bS16 (85 aa).

It belongs to the bacterial ribosomal protein bS16 family.

In Xanthomonas oryzae pv. oryzae (strain PXO99A), this protein is Small ribosomal subunit protein bS16.